We begin with the raw amino-acid sequence, 272 residues long: MSSSTLFHLFLLSSLLFSCLSNARPDEDDFSYIEGSPNGPENWGNLNPEWKTCGNGMEQSPINLCDDRVIQTPALGKLRTSYQAARATLKNNGHDIMVNFKSDAGSQFINQVRYQLKRIHFHSPSEHVLNGERFDLEVQMVHESQDQRRAVTAILFRFGRSDPFLSDLEDFISQISKSEKNEVDAGVVDPRQLLQFDDPAYYRYMGSFTAPPCTEDITWTVIKKLGTVSPRQVLMLKQAVNENAINNARPLQPLKFRTIFFYPRQKSNHDAI.

An N-terminal signal peptide occupies residues 1–25 (MSSSTLFHLFLLSSLLFSCLSNARP). One can recognise an Alpha-carbonic anhydrase domain in the interval 28–263 (DDFSYIEGSP…LKFRTIFFYP (236 aa)). A disulfide bridge links Cys-53 with Cys-213.

It belongs to the alpha-class carbonic anhydrase family. Homodimer; disulfide-linked. Not glycosylated. In terms of tissue distribution, expressed in tuber (at protein level).

With respect to regulation, loss of hemagglutinating activity by EDTA treatment. The activity is fully recovered by the addition of 5 mM Ca(2+) ions, but not with Mg(2+) and Mn 2(+). Hemagglutination activity is inhibited by maltose and its derivatives, with maltopentaose and maltohexaose being the best inhibitors followed by maltose and iso maltose. Not inhibited by glycoproteins. Maltose-binding lectin. No affinity is detected toward glucose. Has hemagglutinating activity against rabbit erythrocytes at 3.9 ug/ml. No carbonate dehydratase or trypsin inhibitor activity detected by measuring the hydrolysis of 4-nitrophenyl acetate or the inhibition of bovine trypsin-catalyzed hydrolysis of N-benzoyl-L-arginine ethyl ester, respectively. The polypeptide is Dioscorin DB3L (Dioscorea polystachya (Chinese yam)).